A 441-amino-acid chain; its full sequence is MQPMEVPEIEKQIGINLYSTNTEGLGGRLRQEVEDFIVKEITNREEGKDGRYLVLELTKRDWDTHHFTRTLAKILQISQKRISVAGTKDKRALTTQKISIFDIDALEIEKIHLKDVELKVLGRSRKSVELGDLWGNEFIITIRDISSSPEETRTILEKTNSKVLTQGGVPNFFGVQRFGSVRSVTHLVGKAIVEGNFEKAAMLYIAEPFPEEPEETKAARQFVKETRDFKEGLKTYPLRLGHERAMMNHLISNPEDYSGAFSVLPKNLYRMFVHAYQSYIYNMILCRRIESGISLNRAVEGDIVCFRNEAGLPDSSKTEKVTSETVNAMNRLIKHGRAFITAPLPGFNTEFASGVPGEIESKILKELRVSLEGFNVEEFPEMSSKGTRREVLLQVEPKFEVGEDELNPGKSKTVLEFMLPKGSYATTVLREYMKVDPLQMS.

Asp89 functions as the Nucleophile in the catalytic mechanism. One can recognise a TRUD domain in the interval 168–393; the sequence is GVPNFFGVQR…SKGTRREVLL (226 aa).

The protein belongs to the pseudouridine synthase TruD family.

The catalysed reaction is uridine(13) in tRNA = pseudouridine(13) in tRNA. Could be responsible for synthesis of pseudouridine from uracil-13 in transfer RNAs. In Methanosarcina acetivorans (strain ATCC 35395 / DSM 2834 / JCM 12185 / C2A), this protein is Probable tRNA pseudouridine synthase D.